The primary structure comprises 396 residues: Potassium channel subfamily K member 9 (396 aa).

At 1–8 the chain is on the cytoplasmic side; that stretch reads MKRQNVRT. The helical transmembrane segment at 9–29 threads the bilayer; that stretch reads LSLIACTFTYLLVGAAVFDAL. At 30–88 the chain is on the extracellular side; the sequence is ESDHEMREEEKLKAEEVRLRGKYNISSDDYQQLELVILQSEPHRAGVQWKFAGSFYFAI. The N-linked (GlcNAc...) asparagine glycan is linked to Asn-53. The pore-forming intramembrane region spans 89 to 101; sequence TVITTIGYGHAAP. K(+) is bound by residues Thr-93, Ile-94, Gly-95, and Tyr-96. Positions 93 to 98 are selectivity filter 1; the sequence is TIGYGH. The Extracellular portion of the chain corresponds to 102–107; sequence GTDAGK. A helical transmembrane segment spans residues 108-128; the sequence is AFCMFYAVLGIPLTLVMFQSL. The Cytoplasmic portion of the chain corresponds to 129–158; the sequence is GERMNTFVRYLLKRIKKCCGMRNTEVSMEN. The helical transmembrane segment at 159–179 threads the bilayer; it reads MVTVGFFSCMGTLCLGAAAFS. At 180 to 194 the chain is on the extracellular side; that stretch reads QCEDWSFFHAYYYCF. Positions 195–207 form an intramembrane region, pore-forming; that stretch reads ITLTTIGFGDFVA. Positions 199, 200, 201, and 202 each coordinate K(+). The tract at residues 199–204 is selectivity filter 2; that stretch reads TIGFGD. Residues 208–218 lie on the Extracellular side of the membrane; that stretch reads LQSKGALQRKP. A helical transmembrane segment spans residues 219 to 239; it reads FYVAFSFMYILVGLTVIGAFL. The Cytoplasmic portion of the chain corresponds to 240–396; that stretch reads NLVVLRFLTM…HRLHIRRKSI (157 aa). The tract at residues 243–248 is X-gate; sequence VLRFLT.

This sequence belongs to the two pore domain potassium channel (TC 1.A.1.8) family. Homodimer. Heterodimer with KCNK1. Heterodimer with KCNK3. Highly expressed in the CNS and at lower levels in the colon, kidney, liver, lung, spleen, stomach and skeletal muscle. The highest expression was found in the olfactory nuclei, piriform cortex, cerebellum, antedorsal thalmic nucleus, pontine nucleus, dorsal raphe and several nuclei in the medulla. Shows a non-homogeneous distribution in the hippocampus. Expressed at highest levels in the lateral posterior and inferior portions and at medium levels in neocortex. Expressed in motoneurons, including hypoglossal motoneurons (at protein level).

The protein resides in the cell membrane. It is found in the mitochondrion inner membrane. Its subcellular location is the cell projection. It localises to the dendrite. It carries out the reaction K(+)(in) = K(+)(out). The enzyme catalyses Na(+)(in) = Na(+)(out). Activated by halothane and isoflurane. Inhibited by external acidification, diacylglycerol, anandamide and AGT/angiotensin II. Ruthenium red inhibits homomeric but not KCNK3:KCNK9 heteromeric channels. Functionally, k(+) channel that conducts voltage-dependent outward rectifying currents upon membrane depolarization. Voltage sensing is coupled to K(+) electrochemical gradient in an 'ion flux gating' mode where outward but not inward ion flow opens the gate. Changes ion selectivity and becomes permeable to Na(+) ions in response to extracellular acidification. Protonation of the pH sensor His-98 stabilizes C-type inactivation conformation likely converting the channel from outward K(+)-conducting, to inward Na(+)-conducting to nonconductive state. Homo- and heterodimerizes to form functional channels with distinct regulatory and gating properties. Allows K(+) currents with fast-gating kinetics important for the repolarization and hyperpolarization phases of action potentials. In granule neurons, hyperpolarizes the resting membrane potential to limit intrinsic neuronal excitability, but once the action potential threshold is reached, supports high-frequency action potential firing and increased neuronal excitability. Homomeric and/or heteromeric KCNK3:KCNK9 channels operate in cerebellar granule cells, whereas heteromeric KCNK1:KCNK9 enables currents in hippocampal dentate gyrus granule neurons. Dispensable for central chemosensory respiration i.e. breathing controlled by brainstem CO2/pH, it rather conducts pH-sensitive currents and controls the firing rate of serotonergic raphe neurons involved in potentiation of the respiratory chemoreflex. In retinal ganglion cells, mediates outward rectifying currents that regulate action potentials in response to acidification of the synaptic cleft. Involved in transmission of image-forming and nonimage-forming visual information in the retina. In adrenal gland, contributes to the maintenance of a hyperpolarized resting membrane potential of aldosterone-producing cells at zona glomerulosa and limits aldosterone release as part of a regulatory mechanism that controls arterial blood pressure and electrolyte homeostasis. The chain is Potassium channel subfamily K member 9 from Rattus norvegicus (Rat).